Consider the following 389-residue polypeptide: Chalcone synthase (389 aa).

Cys164 is a catalytic residue.

It belongs to the thiolase-like superfamily. Chalcone/stilbene synthases family.

It carries out the reaction (E)-4-coumaroyl-CoA + 3 malonyl-CoA + 3 H(+) = 2',4,4',6'-tetrahydroxychalcone + 3 CO2 + 4 CoA. It functions in the pathway secondary metabolite biosynthesis; flavonoid biosynthesis. Functionally, the primary product of this enzyme is 4,2',4',6'-tetrahydroxychalcone (also termed naringenin-chalcone or chalcone) which can under specific conditions spontaneously isomerize into naringenin. This chain is Chalcone synthase (CHS), found in Catharanthus roseus (Madagascar periwinkle).